Here is a 124-residue protein sequence, read N- to C-terminus: Large ribosomal subunit protein uL14 (124 aa).

It belongs to the universal ribosomal protein uL14 family. As to quaternary structure, part of the 50S ribosomal subunit. Forms a cluster with proteins L3 and L19. In the 70S ribosome, L14 and L19 interact and together make contacts with the 16S rRNA in bridges B5 and B8.

Functionally, binds to 23S rRNA. Forms part of two intersubunit bridges in the 70S ribosome. This is Large ribosomal subunit protein uL14 from Clostridium novyi (strain NT).